The sequence spans 333 residues: Serine racemase (333 aa).

Glu13 lines the Mg(2+) pocket. Ser31, Ser32, Ile33, Lys51, and Thr52 together coordinate ATP. Residue Lys56 is the Proton acceptor of the active site. The residue at position 56 (Lys56) is an N6-(pyridoxal phosphate)lysine. Residue Pro69 coordinates Ca(2+). Thr71 bears the Phosphothreonine mark. Thr81 serves as a coordination point for Ca(2+). Ser84 acts as the Proton acceptor in catalysis. Asn86 contacts pyridoxal 5'-phosphate. Gln89 provides a ligand contact to ATP. An S-nitrosocysteine modification is found at Cys113. Position 121 (Tyr121) interacts with ATP. Residue Asn154 coordinates pyridoxal 5'-phosphate. Asp178 is a Mg(2+) binding site. Pyridoxal 5'-phosphate contacts are provided by Gly185, Gly186, Gly187, Gly188, and Met189. The Mg(2+) site is built by Glu210, Ala214, Asp216, and Asn247. Positions 210, 214, 216, and 247 each coordinate Ca(2+). The Mn(2+) site is built by Glu210, Ala214, and Asp216. ATP is bound at residue Lys279. Ser313 provides a ligand contact to pyridoxal 5'-phosphate. Asn316 is an ATP binding site.

The protein belongs to the serine/threonine dehydratase family. In terms of assembly, homodimer. Mg(2+) serves as cofactor. Mn(2+) is required as a cofactor. The cofactor is Ca(2+). Requires pyridoxal 5'-phosphate as cofactor. S-nitrosylated, leading to decrease the enzyme activity. Expressed in the cerebellum and frontal cortex (at protein level).

It catalyses the reaction L-serine = D-serine. The catalysed reaction is D-serine = pyruvate + NH4(+). It carries out the reaction L-serine = pyruvate + NH4(+). With respect to regulation, allosterically activated by magnesium, and possibly also other divalent metal cations. Allosterically activated by ATP, ADP or GTP. Competitively inhibited by malonate. Functionally, catalyzes the synthesis of D-serine from L-serine. D-serine is a key coagonist with glutamate at NMDA receptors. Has dehydratase activity towards both L-serine and D-serine. The protein is Serine racemase (Srr) of Rattus norvegicus (Rat).